The chain runs to 385 residues: GDSL esterase/lipase At5g08460 (385 aa).

The first 35 residues, 1–35 (MHDSEIFKFKDMMMMSCTVQTLVLVPWFLVVFVLA), serve as a signal peptide directing secretion. Catalysis depends on Ser-56, which acts as the Nucleophile. N-linked (GlcNAc...) asparagine glycosylation is found at Asn-218 and Asn-285. Catalysis depends on residues Asp-350 and His-353. 2 N-linked (GlcNAc...) asparagine glycosylation sites follow: Asn-368 and Asn-378.

Belongs to the 'GDSL' lipolytic enzyme family.

It is found in the secreted. The polypeptide is GDSL esterase/lipase At5g08460 (Arabidopsis thaliana (Mouse-ear cress)).